A 172-amino-acid chain; its full sequence is Podoplanin (172 aa).

Residues 1 to 22 (MWTVPVLFWVLGSVWFWDSAQG) form the signal peptide. The Extracellular portion of the chain corresponds to 23–141 (GTIGVNEDDI…KKDGLPVVTL (119 aa)). Thr-37, Thr-51, Thr-52, Thr-53, and Thr-56 each carry an O-linked (GalNAc...) threonine glycan. Residues 49–132 (KITTTGATGG…AGDETQTTDK (84 aa)) form a disordered region. Residues 51-63 (TTTGATGGLNEST) show a composition bias toward polar residues. The N-linked (GlcNAc...) asparagine glycan is linked to Asn-60. Residues Thr-63, Thr-71, and Thr-77 are each glycosylated (O-linked (GalNAc...) threonine). Over residues 72–81 (QRERGTKPPL) the composition is skewed to basic and acidic residues. Ser-85 is a glycosylation site (O-linked (GalNAc...) serine). Residue Thr-86 is glycosylated (O-linked (GalNAc...) threonine). O-linked (GalNAc...) serine glycosylation is present at Ser-87. An O-linked (GalNAc...) threonine glycan is attached at Thr-89. Ser-90 carries O-linked (GalNAc...) serine glycosylation. Positions 90–99 (SDHDHREHES) are enriched in basic and acidic residues. 5 O-linked (GalNAc...) threonine glycosylation sites follow: Thr-100, Thr-101, Thr-102, Thr-107, and Thr-115. A compositionally biased stretch (low complexity) spans 100-109 (TTTVKVVTSH). Residues 110–132 (SVDKKTSHPNRDNAGDETQTTDK) show a composition bias toward basic and acidic residues. The chain crosses the membrane as a helical span at residues 142–162 (VGIIVGVLLAIGFVGGIFIVV). The tract at residues 143-147 (GIIVG) is requires for dimerization and lipidd rafts association. Topologically, residues 163 to 172 (MKKISGRFSP) are cytoplasmic. A requires for interaction with MSN and EZR region spans residues 164 to 165 (KK).

Belongs to the podoplanin family. Homodimer. Interacts with CLEC1B; the interaction is independent of CLEC1B glycosylation and activates CLEC1B; the interaction is dependent of sialic acid on O-glycans. Interacts with CD9; this interaction is homophilic and attenuates platelet aggregation and pulmonary metastasis induced by PDPN. Interacts with LGALS8; the interaction is glycosylation-dependent; may participate in connection of the lymphatic endothelium to the surrounding extracellular matrix. Interacts with HSPA9. Interacts (via extracellular domain) with CD44; this interaction is required for PDPN-mediated directional migration and regulation of lamellipodia extension/stabilization during cell spreading and migration. Interacts (via cytoplasmic domain) with MSN and EZR; activates RHOA and promotes epithelial-mesenchymal transition. Interacts with CCL21; relocalized PDPN to the basolateral membrane. Extensively O-glycosylated. Contains sialic acid residues. O-glycosylation is necessary for platelet aggregation activity. Disialylated at Thr-52; sialic acid is critical for platelet-aggregating activity and for CLEC1B interaction. In terms of processing, phosphorylated by PKA; decreases cell migration. Post-translationally, the N-terminus is blocked. In terms of tissue distribution, detected at high levels in lung and brain, at lower levels in kidney, stomach, liver, spleen and esophagus, and not detected in skin and small intestine. Expressed in epithelial cells of choroid plexus, ependyma, glomerulus and alveolus, in mesothelial cells and in endothelia of lymphatic vessels. Also expressed in stromal cells of peripheral lymphoid tissue and thymic epithelial cells. Detected in carcinoma cell lines and cultured fibroblasts. Expressed at higher levels in colon carcinomas than in normal colon tissue.

It localises to the membrane. It is found in the cell projection. Its subcellular location is the lamellipodium membrane. The protein localises to the filopodium membrane. The protein resides in the microvillus membrane. It localises to the ruffle membrane. It is found in the membrane raft. Its subcellular location is the apical cell membrane. The protein localises to the basolateral cell membrane. The protein resides in the invadopodium. Functionally, mediates effects on cell migration and adhesion through its different partners. During development plays a role in blood and lymphatic vessels separation by binding CLEC1B, triggering CLEC1B activation in platelets and leading to platelet activation and/or aggregation. Interaction with CD9, on the contrary, attenuates platelet aggregation and pulmonary metastasis induced by PDPN. Mediates effects on cell migration and adhesion through its different partners. Through MSN or EZR interaction promotes epithelial-mesenchymal transition (EMT) leading to ERZ phosphorylation and triggering RHOA activation leading to cell migration increase and invasiveness. Interaction with CD44 promotes directional cell migration in epithelial and tumor cells. In lymph nodes (LNs), controls fibroblastic reticular cells (FRCs) adhesion to the extracellular matrix (ECM) and contraction of the actomyosin by maintaining ERM proteins (EZR; MSN and RDX) and MYL9 activation through association with unknown transmembrane proteins. Engagement of CLEC1B by PDPN promotes FRCs relaxation by blocking lateral membrane interactions leading to reduction of ERM proteins (EZR; MSN and RDX) and MYL9 activation. Through binding with LGALS8 may participate in connection of the lymphatic endothelium to the surrounding extracellular matrix. In keratinocytes, induces changes in cell morphology showing an elongated shape, numerous membrane protrusions, major reorganization of the actin cytoskeleton, increased motility and decreased cell adhesion. Controls invadopodia stability and maturation leading to efficient degradation of the extracellular matrix (ECM) in tumor cells through modulation of RHOC activity in order to activate ROCK1/ROCK2 and LIMK1/LIMK2 and inactivation of CFL1. Required for normal lung cell proliferation and alveolus formation at birth. Does not function as a water channel or as a regulator of aquaporin-type water channels. Does not have any effect on folic acid or amino acid transport. The polypeptide is Podoplanin (Mus musculus (Mouse)).